A 404-amino-acid chain; its full sequence is Protein translocase subunit SecD (404 aa).

The next 6 membrane-spanning stretches (helical) occupy residues 7–27, 239–259, 262–282, 283–303, 330–350, and 357–377; these read HYIWLFLVIFVPALILYFNKV, LIALGVISVFMIAIYKIPGIV, IALLINGVLVLGLLSGIGAAL, TLPGIAGFILTLGMAVDSNVI, FPAIIDGNITTLLVAAVLFFL, and GFAVTLSLGVVATIITGVFVS.

It belongs to the SecD/SecF family. SecD subfamily. Forms a complex with SecF. Part of the essential Sec protein translocation apparatus which comprises SecA, SecYEG and auxiliary proteins SecDF. Other proteins may also be involved.

The protein resides in the cell inner membrane. Its function is as follows. Part of the Sec protein translocase complex. Interacts with the SecYEG preprotein conducting channel. SecDF uses the proton motive force (PMF) to complete protein translocation after the ATP-dependent function of SecA. The chain is Protein translocase subunit SecD from Leptotrichia buccalis (strain ATCC 14201 / DSM 1135 / JCM 12969 / NCTC 10249 / C-1013-b).